We begin with the raw amino-acid sequence, 329 residues long: MSRILEGDPVEGEKSWENELRPQKFEDFPGQDDVKEKLKVFVAAAKHRGESLDHVLLCGPPGLGKTTLSKIIANDMGAEIKMTSAPAIDKKGDLAAILTSLKPHSVLFIDEIHRLSRHVEEYLYTAMEDYYIDIVTGEGLGARSMKFTLAPFTLVGATTRAGLLNPPFRDRFGIVERLQFYDKDALRQILMRSAEILKVEIDEEGAEEVARRSRGTPRVANRLLKRVRDYAQVKGNGVVSKDIAVYALNQLGVDQYGLDLMDRRILSLIQDKYAGGPVGIDTIAAALSEERDTLEEVYEPFLIQEGFIQKTQRGRVITEFAKSSVLADK.

A disordered region spans residues 1–20 (MSRILEGDPVEGEKSWENEL). The large ATPase domain (RuvB-L) stretch occupies residues 1–181 (MSRILEGDPV…FGIVERLQFY (181 aa)). A compositionally biased stretch (basic and acidic residues) spans 11–20 (EGEKSWENEL). Residues L20, R21, G62, K65, T66, T67, 128–130 (EDY), R171, Y181, and R218 each bind ATP. T66 lines the Mg(2+) pocket. Residues 182-252 (DKDALRQILM…IAVYALNQLG (71 aa)) form a small ATPAse domain (RuvB-S) region. The interval 255 to 329 (QYGLDLMDRR…FAKSSVLADK (75 aa)) is head domain (RuvB-H). Positions 291, 310, and 315 each coordinate DNA.

It belongs to the RuvB family. Homohexamer. Forms an RuvA(8)-RuvB(12)-Holliday junction (HJ) complex. HJ DNA is sandwiched between 2 RuvA tetramers; dsDNA enters through RuvA and exits via RuvB. An RuvB hexamer assembles on each DNA strand where it exits the tetramer. Each RuvB hexamer is contacted by two RuvA subunits (via domain III) on 2 adjacent RuvB subunits; this complex drives branch migration. In the full resolvosome a probable DNA-RuvA(4)-RuvB(12)-RuvC(2) complex forms which resolves the HJ.

Its subcellular location is the cytoplasm. It carries out the reaction ATP + H2O = ADP + phosphate + H(+). The RuvA-RuvB-RuvC complex processes Holliday junction (HJ) DNA during genetic recombination and DNA repair, while the RuvA-RuvB complex plays an important role in the rescue of blocked DNA replication forks via replication fork reversal (RFR). RuvA specifically binds to HJ cruciform DNA, conferring on it an open structure. The RuvB hexamer acts as an ATP-dependent pump, pulling dsDNA into and through the RuvAB complex. RuvB forms 2 homohexamers on either side of HJ DNA bound by 1 or 2 RuvA tetramers; 4 subunits per hexamer contact DNA at a time. Coordinated motions by a converter formed by DNA-disengaged RuvB subunits stimulates ATP hydrolysis and nucleotide exchange. Immobilization of the converter enables RuvB to convert the ATP-contained energy into a lever motion, pulling 2 nucleotides of DNA out of the RuvA tetramer per ATP hydrolyzed, thus driving DNA branch migration. The RuvB motors rotate together with the DNA substrate, which together with the progressing nucleotide cycle form the mechanistic basis for DNA recombination by continuous HJ branch migration. Branch migration allows RuvC to scan DNA until it finds its consensus sequence, where it cleaves and resolves cruciform DNA. The sequence is that of Holliday junction branch migration complex subunit RuvB from Bdellovibrio bacteriovorus (strain ATCC 15356 / DSM 50701 / NCIMB 9529 / HD100).